The sequence spans 88 residues: Antitoxin VapB3 (88 aa).

Antitoxin component of a type II toxin-antitoxin (TA) system. The protein is Antitoxin VapB3 (vapB3) of Mycobacterium tuberculosis (strain CDC 1551 / Oshkosh).